The primary structure comprises 321 residues: D-alanine--D-alanine ligase (321 aa).

The region spanning 121-315 is the ATP-grasp domain; that stretch reads RSCFLKNNIN…FTNLIEEIIK (195 aa). 148–199 provides a ligand contact to ATP; the sequence is MKRPYVIKPLKQGSSIGVEVIFEEDDFHFIDYDFPYGEDIIIEQYIQGQELQ. Residues E268, E282, and N284 each contribute to the Mg(2+) site.

This sequence belongs to the D-alanine--D-alanine ligase family. The cofactor is Mg(2+). Mn(2+) is required as a cofactor.

The protein localises to the cytoplasm. It catalyses the reaction 2 D-alanine + ATP = D-alanyl-D-alanine + ADP + phosphate + H(+). Its pathway is cell wall biogenesis; peptidoglycan biosynthesis. In terms of biological role, cell wall formation. The chain is D-alanine--D-alanine ligase from Rickettsia typhi (strain ATCC VR-144 / Wilmington).